The primary structure comprises 644 residues: Exoribonuclease 2 (644 aa).

The RNB domain maps to 189–516 (REDLTALDFV…NHRLLKAVIK (328 aa)). Residues 561–643 (DTRFAAEIVD…ETRSIIARPV (83 aa)) form the S1 motif domain.

The protein belongs to the RNR ribonuclease family. RNase II subfamily.

Its subcellular location is the cytoplasm. It catalyses the reaction Exonucleolytic cleavage in the 3'- to 5'-direction to yield nucleoside 5'-phosphates.. Functionally, involved in mRNA degradation. Hydrolyzes single-stranded polyribonucleotides processively in the 3' to 5' direction. The chain is Exoribonuclease 2 from Escherichia coli O45:K1 (strain S88 / ExPEC).